A 539-amino-acid polypeptide reads, in one-letter code: Phenylacetyl-CoA ligase epaB (539 aa).

Arg-188 to Lys-199 contacts AMP. The segment at Glu-449–Lys-525 is AMP-binding.

Belongs to the ATP-dependent AMP-binding enzyme family.

It functions in the pathway secondary metabolite biosynthesis. Its function is as follows. Phenylacetyl-CoA ligase; part of the gene cluster that mediates the biosynthesis of nigerpyrone and its derivatives carbonarone A and pestalamide A. The biosynthesis pathway begins with the polyketide assembly by epaA to form phenylacetyl triketide precursor from successive condensation of two malonyl-CoA, presumably with one phenylacetyl-CoA starter unit produced by the phenylacetyl-CoA ligase epaB. For the nigerpyrone biosynthesis, the reactive polyketide chain is released as an aldehyde through the R-domain. A nonenzymatic cyclization and dehydration may create nigerpyrone. For the biosynthesis of carbonarone A and pestalamide A, an extra methyl group is added through the C-methyltransferase domain. Several further steps involving the dehydrogenase orf1, the cytochrome P450 monooxygenase orf2 and the FAD-dependent monooxygenase orf3 are required to form a carbonarone A precursor which is converted to carbonarone A via cyclization. The O-acetyltransferase epaC could catalyze the transfer of 2-methylsuccinyl-CoA, a common intermediate in the ethylmalonyl-CoA pathway, to generate the final product pestalamide A. In Aspergillus niger (strain ATCC MYA-4892 / CBS 513.88 / FGSC A1513), this protein is Phenylacetyl-CoA ligase epaB.